The sequence spans 1078 residues: Carbamoyl phosphate synthase large chain (1078 aa).

Residues 1–401 are carboxyphosphate synthetic domain; it reads MARQPLVSSV…ALQKAVRGLE (401 aa). Residues Arg-129, Arg-169, Gly-175, Gly-176, Arg-208, Leu-210, Glu-215, Gly-241, Val-242, His-243, Gln-284, and Glu-298 each coordinate ATP. Residues 133-327 form the ATP-grasp 1 domain; the sequence is KELLLEIGEP…IARIAAKLAI (195 aa). Positions 284, 298, and 300 each coordinate Mg(2+). Gln-284, Glu-298, and Asn-300 together coordinate Mn(2+). The segment at 402–546 is oligomerization domain; sequence TDQTDLTWED…YATYEDENEA (145 aa). Residues 547-935 are carbamoyl phosphate synthetic domain; the sequence is PPLDSPKAVV…ALAKAFLAAG (389 aa). Residues 677–867 form the ATP-grasp 2 domain; it reads ERFLHELGIP…MVDVATQILL (191 aa). ATP contacts are provided by Arg-713, Lys-752, Leu-754, Glu-758, Gly-783, Val-784, His-785, Ser-786, Gln-826, and Glu-838. Residues Gln-826, Glu-838, and Asn-840 each coordinate Mg(2+). Residues Gln-826, Glu-838, and Asn-840 each coordinate Mn(2+). The region spanning 936 to 1078 is the MGS-like domain; it reads LAIERGAPVL…AYRTREAVLA (143 aa). The allosteric domain stretch occupies residues 936-1078; that stretch reads LAIERGAPVL…AYRTREAVLA (143 aa).

Belongs to the CarB family. In terms of assembly, composed of two chains; the small (or glutamine) chain promotes the hydrolysis of glutamine to ammonia, which is used by the large (or ammonia) chain to synthesize carbamoyl phosphate. Tetramer of heterodimers (alpha,beta)4. It depends on Mg(2+) as a cofactor. The cofactor is Mn(2+).

It carries out the reaction hydrogencarbonate + L-glutamine + 2 ATP + H2O = carbamoyl phosphate + L-glutamate + 2 ADP + phosphate + 2 H(+). The catalysed reaction is hydrogencarbonate + NH4(+) + 2 ATP = carbamoyl phosphate + 2 ADP + phosphate + 2 H(+). It functions in the pathway amino-acid biosynthesis; L-arginine biosynthesis; carbamoyl phosphate from bicarbonate: step 1/1. The protein operates within pyrimidine metabolism; UMP biosynthesis via de novo pathway; (S)-dihydroorotate from bicarbonate: step 1/3. In terms of biological role, large subunit of the glutamine-dependent carbamoyl phosphate synthetase (CPSase). CPSase catalyzes the formation of carbamoyl phosphate from the ammonia moiety of glutamine, carbonate, and phosphate donated by ATP, constituting the first step of 2 biosynthetic pathways, one leading to arginine and/or urea and the other to pyrimidine nucleotides. The large subunit (synthetase) binds the substrates ammonia (free or transferred from glutamine from the small subunit), hydrogencarbonate and ATP and carries out an ATP-coupled ligase reaction, activating hydrogencarbonate by forming carboxy phosphate which reacts with ammonia to form carbamoyl phosphate. The polypeptide is Carbamoyl phosphate synthase large chain (Thermomicrobium roseum (strain ATCC 27502 / DSM 5159 / P-2)).